The following is a 205-amino-acid chain: Shieldin complex subunit 1 (205 aa).

In terms of assembly, component of the shieldin complex, consisting of SHLD1, SHLD2, SHLD3 and MAD2L2/REV7. Within the complex, SHLD2 forms a scaffold which interacts with a SHLD3-MAD2L2 subcomplex via its N-terminus, and with SHLD1 via its C-terminus. Interacts with ASTE1.

The protein resides in the chromosome. Component of the shieldin complex, which plays an important role in repair of DNA double-stranded breaks (DSBs). During G1 and S phase of the cell cycle, the complex functions downstream of TP53BP1 to promote non-homologous end joining (NHEJ) and suppress DNA end resection. Mediates various NHEJ-dependent processes including immunoglobulin class-switch recombination, and fusion of unprotected telomeres. This is Shieldin complex subunit 1 from Homo sapiens (Human).